We begin with the raw amino-acid sequence, 639 residues long: E3 ubiquitin-protein ligase RNF12 (639 aa).

Disordered stretches follow at residues 1 to 28 (MESADSAGKGSTEQSESQRQSQMDRLDR), 67 to 403 (RLQQ…ESER), and 467 to 534 (NDTD…GGVT). Over residues 11–21 (STEQSESQRQS) the composition is skewed to low complexity. Composition is skewed to polar residues over residues 110-138 (SVRQTGNTTRSGQRGNQSWRAVSRTNPNS) and 147-166 (INVNRTSGNPSMPSLEQSSE). Basic and acidic residues predominate over residues 213–228 (RSPDQRRTRARTDRSR). The span at 244-253 (HSSSQTVDAS) shows a compositional bias: polar residues. The span at 269–286 (SSQMQNSSSSNETEGSSR) shows a compositional bias: low complexity. The span at 290–302 (HITARQQALGTEG) shows a compositional bias: polar residues. Composition is skewed to low complexity over residues 303 to 327 (QSQSQTQTQSQSQTQTQSQTQSQST) and 335 to 348 (SRSSSQPPQTDSSS). Over residues 349–358 (NAETTGTGQR) the composition is skewed to polar residues. A compositionally biased stretch (basic and acidic residues) spans 372–382 (RPGDYRQRDSI). Residues 383-399 (ANRTRSRSQTPNNTVTY) show a composition bias toward polar residues. Composition is skewed to pro residues over residues 473 to 482 (NPTPVSPPAA) and 493 to 506 (PEPPAPIVEPPEPV). The RING-type; atypical zinc finger occupies 585-626 (CSVCITEYTEGNKLRKLPCSHEYHVHCIDRWLSENSTCPICR). Positions 636-639 (ESIV) match the PDZ-binding motif.

The protein belongs to the RNF12 family. In terms of assembly, forms homodimers through the C-terminal region. The N-terminus interacts with the homeobox of LIM/homeobox factor lhx1/lim1, with lhx3/lim3 and lhx5/lim5, and with the N-terminus of ldb1.

The protein localises to the nucleus. It carries out the reaction S-ubiquitinyl-[E2 ubiquitin-conjugating enzyme]-L-cysteine + [acceptor protein]-L-lysine = [E2 ubiquitin-conjugating enzyme]-L-cysteine + N(6)-ubiquitinyl-[acceptor protein]-L-lysine.. It participates in protein modification; protein ubiquitination. Acts as an E3 ubiquitin-protein ligase specific for ldb1, mediating ubiquitination and proteasome-dependent degradation of excess ldb1 in a RING-dependent manner. Does not degrade ldb1 bound to lhx1/lim1, nor lim1 itself and thus contributes to the establishment of proper ldb1-lhx1/lim1 stoichiometry and the formation of a ldb1-lhx1/lim1 complex. Interferes with Spemann organizer function and suppresses secondary axis formation induced by ldb1 and lhx1/lim1. This Xenopus tropicalis (Western clawed frog) protein is E3 ubiquitin-protein ligase RNF12.